A 1187-amino-acid chain; its full sequence is MEPNSLQWVGSPCGLHGPYIFYKAFQFHLEGKPRILSLGDFFFVRCTPKDPICIAELQLLWEERTSRQLLSSSKLYFLPEDTPQGRNSDHGEDEVIAVSEKVIVKLEDLVKWVHSDFSKWRCGLQAGAVKTTALGRNGQKEALLKYRQSTLNSGLNFKDVLKEKADLGEDEEETNVIVLSYPQYCRYRSMLKRIQDKPPSILTDQFALALGGIAVVSKNPQILYCRDTFDHPTLIENESICDEFAPNLKGRPRKKKPCPQRRDSFSGVKDSNNNSDGKAVAKVKCEARSALSKPKNNHNNCKKVSNEEKPKVAIGEECRADEQAFLVALYKYMKERKTPIERIPYLGFKQINLWTMFQAAQKLGGYETITARRQWKHIYDELGGNPGSTSAATCTRRHYERLILPYERFIKGEEDKPLPPIKPRKQENSSQENENKTKVSGTKRIKHEIPKSKKEKENAPKPQESPEVSSEPEKEQETSNQKSITEPLPAAEGKRKMEGYQDFAARPVGSRADPEKDSDADRGAGGATAAEEAGEQGPVPPLPSAPAAPDRGPALGPGAGKQPLTSPSAPADSKQEPQPCCFAESPDSEPQEPPFPGFPAAQPPLASQSELEEDKLPAMADYIANCTVKVDQLGSDDIHNALKQTPKVLVVQSFDMFKDKDLTGPMNENHGLNYTPLLYSRGNPGIMSPLAKKKLLSQVSGAGLSGSYPYGSPPPLISKKKLIPRDELCSGLPQAHPGQGSDHAAVSRPSVIQHVQSFRSKASEERKGLGDLFKHDKLGRSEPHRCSFSKHHLGPLADSYALKPDAPEGKDKLLEKRALPHAHVPSFLADFYSSPHLHSLYRHAEHHLHAEQTSKYACRDAYRESENSSFPAHKHQEKLHVNYLASLHLQDKKPAPAEAPADEQPTDLSLPKNLHKPTGKVLGLAHAAPGPQESKGAPQFPAGNGQSRDGHPKACRVSPMTLSAPKKYPEPLSRASRPHHVRLESFRKLEGMVHPVLHRKAGPQAVGAARPIKRGLEDLDLVIAGKKARAVSPLDPPKEACGKDKGAELEGEGGKAAAAHGGPAADGHKAALSSPIFPGLYSGSLCGSGLGSRLPAGYSHSLQYLKNQTVLSPLMQPLAFHSLVMQRGIFTSPTNSQQLYRHLAAATPVGSSYGDLLHNSIYPLAAINPQAAFPASQLSSVHPSTKL.

A Glycyl lysine isopeptide (Lys-Gly) (interchain with G-Cter in SUMO2) cross-link involves residue Lys130. Positions Arg251 to Ala279 are disordered. Ser264 is modified (phosphoserine). The 93-residue stretch at Arg319 to Lys411 folds into the ARID domain. N6,N6-dimethyllysine is present on Lys337. The segment at Glu413–Leu611 is disordered. Lys446 participates in a covalent cross-link: Glycyl lysine isopeptide (Lys-Gly) (interchain with G-Cter in SUMO2). Over residues His447 to Ala459 the composition is skewed to basic and acidic residues. Residues Pro460–Ser469 are compositionally biased toward low complexity. Glycyl lysine isopeptide (Lys-Gly) (interchain with G-Cter in SUMO2) cross-links involve residues Lys494 and Lys496. Over residues Ala512 to Arg522 the composition is skewed to basic and acidic residues. A compositionally biased stretch (low complexity) spans Ala527 to Gly537. Glycyl lysine isopeptide (Lys-Gly) (interchain with G-Cter in SUMO2) cross-links involve residues Lys767, Lys774, Lys803, Lys810, Lys893, Lys916, Lys920, Lys935, Lys988, Lys1000, and Lys1013. The tract at residues Asp891–Arg977 is disordered. Phosphoserine is present on Ser1032. A disordered region spans residues Ser1032 to Ala1065. The segment covering Pro1036–Glu1048 has biased composition (basic and acidic residues). Glycyl lysine isopeptide (Lys-Gly) (interchain with G-Cter in SUMO2) cross-links involve residues Lys1055 and Lys1069. A compositionally biased stretch (low complexity) spans Lys1055–Ala1065. A Phosphoserine modification is found at Ser1132.

Belongs to the ARID5B family. In terms of processing, methylation at Lys-337 prevents DNA-binding. Demethylation by PHF2 promotes recruitment of the PHF2-ARID5B complex to promoters.

The protein localises to the nucleus. In terms of biological role, transcription coactivator that binds to the 5'-AATA[CT]-3' core sequence and plays a key role in adipogenesis and liver development. Acts by forming a complex with phosphorylated PHF2, which mediates demethylation at Lys-337, leading to target the PHF2-ARID5B complex to target promoters, where PHF2 mediates demethylation of dimethylated 'Lys-9' of histone H3 (H3K9me2), followed by transcription activation of target genes. The PHF2-ARID5B complex acts as a coactivator of HNF4A in liver. Required for adipogenesis: regulates triglyceride metabolism in adipocytes by regulating expression of adipogenic genes. Overexpression leads to induction of smooth muscle marker genes, suggesting that it may also act as a regulator of smooth muscle cell differentiation and proliferation. This Canis lupus familiaris (Dog) protein is AT-rich interactive domain-containing protein 5B (ARID5B).